A 239-amino-acid chain; its full sequence is Ubiquinone biosynthesis O-methyltransferase (239 aa).

Positions 44, 63, 84, and 128 each coordinate S-adenosyl-L-methionine.

It belongs to the methyltransferase superfamily. UbiG/COQ3 family.

It carries out the reaction a 3-demethylubiquinol + S-adenosyl-L-methionine = a ubiquinol + S-adenosyl-L-homocysteine + H(+). The enzyme catalyses a 3-(all-trans-polyprenyl)benzene-1,2-diol + S-adenosyl-L-methionine = a 2-methoxy-6-(all-trans-polyprenyl)phenol + S-adenosyl-L-homocysteine + H(+). The protein operates within cofactor biosynthesis; ubiquinone biosynthesis. Its function is as follows. O-methyltransferase that catalyzes the 2 O-methylation steps in the ubiquinone biosynthetic pathway. The polypeptide is Ubiquinone biosynthesis O-methyltransferase (Xanthomonas axonopodis pv. citri (strain 306)).